The chain runs to 421 residues: Inner membrane protein YihN (421 aa).

At 1–44 (MLTKKKWALFSLLTLCGGTIYKLPSLKDAFYIPMQEYFHLTNGQ) the chain is on the periplasmic side. The chain crosses the membrane as a helical span at residues 45–65 (IGNAMSVNSFVTTVGFFLSIY). Topologically, residues 66–73 (FADKLPRR) are cytoplasmic. A helical membrane pass occupies residues 74-91 (YTMSFSLIATGLLGVYLT). Topologically, residues 92–95 (TMPG) are periplasmic. A helical transmembrane segment spans residues 96-118 (YWGILFVWALFGVTCDMMNWPVL). Residues 119–146 (LKSVSRLGNSEQQGRLFGFFETGRGIVD) lie on the Cytoplasmic side of the membrane. A helical transmembrane segment spans residues 147 to 167 (TVVAFSALAVFTWFGSGLLGF). Position 168 (lysine 168) is a topological domain, periplasmic. The helical transmembrane segment at 169–189 (AGIWFYSLIVIAVGIIIFFVL) threads the bilayer. Over 190–220 (NDKEEAPSVEVKKEDGASKNTSMTSVLKDKT) the chain is Cytoplasmic. A run of 2 helical transmembrane segments spans residues 221 to 241 (IWLI…LTFF) and 242 to 262 (IPFL…YGII). The Cytoplasmic portion of the chain corresponds to 263 to 288 (NQYCLKMIGGPIGGMISDKILKSPSK). A run of 2 helical transmembrane segments spans residues 289–309 (YLCY…MLPH) and 310–330 (ESMP…IVFT). Topologically, residues 331 to 354 (QRAVFFAPIGEAKIAENKTGAAMA) are cytoplasmic. A helical membrane pass occupies residues 355 to 375 (LGSFIGYAPAMFCFSLYGYIL). Residues 376-385 (DLNPGIIGYK) lie on the Periplasmic side of the membrane. Residues 386–406 (IVFGIMACFAFSGAVVSVMLV) form a helical membrane-spanning segment. Residues 407-421 (KRISQRKKEMLAAEA) are Cytoplasmic-facing.

Belongs to the major facilitator superfamily.

Its subcellular location is the cell inner membrane. This is Inner membrane protein YihN (yihN) from Escherichia coli (strain K12).